Consider the following 131-residue polypeptide: Small ribosomal subunit protein uS8 (131 aa).

Belongs to the universal ribosomal protein uS8 family. As to quaternary structure, part of the 30S ribosomal subunit. Contacts proteins S5 and S12.

Functionally, one of the primary rRNA binding proteins, it binds directly to 16S rRNA central domain where it helps coordinate assembly of the platform of the 30S subunit. This chain is Small ribosomal subunit protein uS8, found in Polaromonas naphthalenivorans (strain CJ2).